Here is a 105-residue protein sequence, read N- to C-terminus: Protein LITTLE ZIPPER 2 (105 aa).

Residues 1-20 form a disordered region; the sequence is MCLTTSEPPFPDTDTPTMRS. A coiled-coil region spans residues 39-60; it reads NLTRRRRLLKEQKEMEMRNLKL.

Interacts with REV.

Functionally, competitive inhibitor of the HD-ZIPIII transcription factors in shoot apical meristem (SAM) development. Acts by forming non-functional heterodimers. Part of a negative feedback loop. Essential for proper functioning of stem cells in the SAM. The protein is Protein LITTLE ZIPPER 2 of Arabidopsis thaliana (Mouse-ear cress).